The chain runs to 267 residues: Hydroxyethylthiazole kinase (267 aa).

M44 is a substrate binding site. Residues K120 and T166 each coordinate ATP. A substrate-binding site is contributed by G193.

The protein belongs to the Thz kinase family. The cofactor is Mg(2+).

It carries out the reaction 5-(2-hydroxyethyl)-4-methylthiazole + ATP = 4-methyl-5-(2-phosphooxyethyl)-thiazole + ADP + H(+). Its pathway is cofactor biosynthesis; thiamine diphosphate biosynthesis; 4-methyl-5-(2-phosphoethyl)-thiazole from 5-(2-hydroxyethyl)-4-methylthiazole: step 1/1. Functionally, catalyzes the phosphorylation of the hydroxyl group of 4-methyl-5-beta-hydroxyethylthiazole (THZ). The chain is Hydroxyethylthiazole kinase from Desulfitobacterium hafniense (strain DSM 10664 / DCB-2).